Here is a 426-residue protein sequence, read N- to C-terminus: Flotillin-1 (426 aa).

This sequence belongs to the band 7/mec-2 family. Flotillin subfamily. In terms of assembly, heterooligomeric complex of flotillins 1 and 2 and caveolins 1 and 2. Expressed in brain and ventral nerve cord from stage 12-16 of embryogenesis.

Its subcellular location is the cell membrane. It localises to the membrane. The protein localises to the caveola. Its function is as follows. May act as a scaffolding protein within caveolar membranes, functionally participating in formation of caveolae or caveolae-like vesicles. In Drosophila melanogaster (Fruit fly), this protein is Flotillin-1.